The sequence spans 490 residues: MSRMAEQQLYIHGGYTSATSGRTFETINPANGNVLATVQAAGREDVDRAVKSAQQGQKIWAAMTAMERSRILRRAVDILRERNDELAKLETLDTGKAYSETSTVDIVTGADVLEYYAGLIPALEGSQIPLRETLFVYTRREPLGVVAGIGAWNYPIQIALWKSAPALAAGNAMIFKPSEVTPLTALKLAEIYSEAGLPDGVFNVLPGVGAETGQYLTEHPGIAKVSFTGGVASGKKVMANSAASSLKEVTMELGGKSPLIVFDDADLDLAADIAMMANFFSSGQVCTNGTRVFVPAKCKAAFEQKILARVERIRAGDVFDPQTNFGPLVSFPHRDNVLRYIAKGKEEGARVLCGGDVLKGDGFDNGAWVAPTVFTDCRDEMTIVREEIFGPVMSLLTYESEDEVIRRANDTDYGLAAGIVTADLNRAHRVIHQLEAGICWINTWGESPAEMPVGGYKHSGIGRENGVMTLQSYTQVKSIQVEMAKFQSIF.

3 residues coordinate K(+): threonine 26, isoleucine 27, and aspartate 93. Position 150–152 (150–152) interacts with NAD(+); it reads GAW. Lysine 162 serves as the catalytic Charge relay system. 176–179 lines the NAD(+) pocket; sequence KPSE. Residue valine 180 participates in K(+) binding. Residue 230–233 coordinates NAD(+); sequence GVAS. K(+) is bound at residue leucine 246. The Proton acceptor role is filled by glutamate 252. Residues glycine 254, cysteine 286, and glutamate 387 each coordinate NAD(+). Residue cysteine 286 is the Nucleophile of the active site. Cysteine 286 carries the cysteine sulfenic acid (-SOH) modification. K(+) is bound by residues lysine 457 and glycine 460. Residue glutamate 464 is the Charge relay system of the active site.

Belongs to the aldehyde dehydrogenase family. As to quaternary structure, dimer of dimers. Requires K(+) as cofactor.

The enzyme catalyses betaine aldehyde + NAD(+) + H2O = glycine betaine + NADH + 2 H(+). It functions in the pathway amine and polyamine biosynthesis; betaine biosynthesis via choline pathway; betaine from betaine aldehyde: step 1/1. In terms of biological role, involved in the biosynthesis of the osmoprotectant glycine betaine. Catalyzes the irreversible oxidation of betaine aldehyde to the corresponding acid. This chain is Betaine aldehyde dehydrogenase, found in Escherichia coli (strain SE11).